The following is a 156-amino-acid chain: Transcription elongation factor GreA (156 aa).

Residues 6-75 are a coiled coil; the sequence is IYLTKEGYEK…ELENMLSKAE (70 aa).

It belongs to the GreA/GreB family.

Its function is as follows. Necessary for efficient RNA polymerase transcription elongation past template-encoded arresting sites. The arresting sites in DNA have the property of trapping a certain fraction of elongating RNA polymerases that pass through, resulting in locked ternary complexes. Cleavage of the nascent transcript by cleavage factors such as GreA or GreB allows the resumption of elongation from the new 3'terminus. GreA releases sequences of 2 to 3 nucleotides. The protein is Transcription elongation factor GreA of Thermosipho africanus (strain TCF52B).